A 545-amino-acid polypeptide reads, in one-letter code: Chaperonin GroEL (545 aa).

Residues Thr-30–Pro-33, Lys-51, Asp-87–Thr-91, Gly-415, and Asp-495 contribute to the ATP site.

This sequence belongs to the chaperonin (HSP60) family. Forms a cylinder of 14 subunits composed of two heptameric rings stacked back-to-back. Interacts with the co-chaperonin GroES.

It localises to the cytoplasm. It catalyses the reaction ATP + H2O + a folded polypeptide = ADP + phosphate + an unfolded polypeptide.. Together with its co-chaperonin GroES, plays an essential role in assisting protein folding. The GroEL-GroES system forms a nano-cage that allows encapsulation of the non-native substrate proteins and provides a physical environment optimized to promote and accelerate protein folding. The polypeptide is Chaperonin GroEL (Shewanella baltica (strain OS185)).